We begin with the raw amino-acid sequence, 62 residues long: Double zinc ribbon protein TK0111 (62 aa).

Positions 13, 16, 31, 34, 42, 45, 54, and 57 each coordinate Zn(2+).

In terms of assembly, crystallized in association with 70S ribosomes. Zn(2+) serves as cofactor.

This Thermococcus kodakarensis (strain ATCC BAA-918 / JCM 12380 / KOD1) (Pyrococcus kodakaraensis (strain KOD1)) protein is Double zinc ribbon protein TK0111.